The primary structure comprises 1373 residues: Disease resistance protein RRS1 (1373 aa).

The TIR domain occupies 5 to 146 (EKDEEFVCIS…EIVRDVYETH (142 aa)). The NB-ARC domain occupies 170–421 (IGIRCVGIWG…LLEGCGFFPH (252 aa)). Position 179–186 (179–186 (GMPGIGKT)) interacts with ATP. 9 LRR repeats span residues 498–522 (SEEI…AFKN), 535–553 (NPEV…HSLP), 554–575 (NELR…NFDP), 577–598 (HLVE…TKNL), 621–646 (AENL…RLLR), 665–688 (PPNI…TVKP), 742–766 (LPNM…SIQG), 768–793 (PRFL…SLEI), and 831–854 (PRNL…PLSL). The Nuclear localization signal motif lies at 988–1005 (RNFHCWAPGKVVPKVRKD). Positions 1204-1272 (IPAIDEGDLW…YLSEHNHPRP (69 aa)) form a DNA-binding region, WRKY. Residues 1300 to 1323 (RVFQNKDEPNKPHLPSSSTPPGNA) are disordered.

Interacts with PopP2, a R.solanacearum type III effector.

The protein resides in the nucleus. Its function is as follows. Transcription factor. Interacts specifically with the W box (5'-(T)TGAC[CT]-3'), a frequently occurring elicitor-responsive cis-acting element. Also acts as a disease resistance protein involved in resistance to fungal and bacterial pathogens, including R.solanacearum, P.syringae pv. tomato and C.higginsianum. In presence of RPS4, elicites an EDS1-dependent hypersensitive response. The polypeptide is Disease resistance protein RRS1 (Arabidopsis thaliana (Mouse-ear cress)).